The primary structure comprises 103 residues: Large ribosomal subunit protein bL21 (103 aa).

Belongs to the bacterial ribosomal protein bL21 family. As to quaternary structure, part of the 50S ribosomal subunit. Contacts protein L20.

This protein binds to 23S rRNA in the presence of protein L20. In Ruminiclostridium cellulolyticum (strain ATCC 35319 / DSM 5812 / JCM 6584 / H10) (Clostridium cellulolyticum), this protein is Large ribosomal subunit protein bL21.